The sequence spans 137 residues: uncharacterized protein (137 aa).

A run of 3 helical transmembrane segments spans residues 5–25 (ELLWPALITALATMLYLVLVI), 79–99 (IAAILGAVWLLGRILYAWGYY), and 109–129 (FALGSLSSMILVVGALLSILW).

It belongs to the MAPEG family.

It localises to the cell membrane. This is an uncharacterized protein from Synechocystis sp. (strain ATCC 27184 / PCC 6803 / Kazusa).